The following is a 321-amino-acid chain: RNA/RNP complex-1-interacting phosphatase (321 aa).

The segment covering 1-11 (MNQHYGRHGRG) has biased composition (basic residues). The tract at residues 1-27 (MNQHYGRHGRGRGRDFAACAPPKKKGR) is disordered. One can recognise a Tyrosine-protein phosphatase domain in the interval 60-207 (FEAKLMPEEC…LQKRHVRKNR (148 aa)). Cysteine 151 serves as the catalytic Phosphocysteine intermediate. 152 to 157 (THGLNR) is a binding site for substrate. Arginine 157 serves as the catalytic Proton donor/acceptor. The tract at residues 205–262 (KNRNVSAPRTDGLEDSADPTEQVYTNNKPVKKKPRKNRRGGHLAPSQHFQHQTQSSPY) is disordered. Over residues 233-245 (PVKKKPRKNRRGG) the composition is skewed to basic residues. A compositionally biased stretch (polar residues) spans 251 to 262 (QHFQHQTQSSPY).

Belongs to the protein-tyrosine phosphatase family. Non-receptor class dual specificity subfamily. In terms of assembly, monomer. May interact with SFRS7 and SFRS9/SRP30C.

The protein resides in the nucleus. It localises to the nucleus speckle. Its function is as follows. Possesses RNA 5'-triphosphatase and diphosphatase activities, but displays a poor protein-tyrosine phosphatase activity. In addition, has phosphatase activity with ATP, ADP and O-methylfluorescein phosphate (in vitro). Binds to RNA. May participate in nuclear mRNA metabolism. The chain is RNA/RNP complex-1-interacting phosphatase (Dusp11) from Mus musculus (Mouse).